The primary structure comprises 111 residues: Small ribosomal subunit protein bS16 (111 aa).

The protein belongs to the bacterial ribosomal protein bS16 family.

In Rickettsia prowazekii (strain Madrid E), this protein is Small ribosomal subunit protein bS16.